A 427-amino-acid chain; its full sequence is Enolase (427 aa).

Gln163 contributes to the (2R)-2-phosphoglycerate binding site. Glu205 functions as the Proton donor in the catalytic mechanism. Mg(2+) is bound by residues Asp242, Glu285, and Asp312. Residues Lys337, Arg366, Ser367, and Lys388 each coordinate (2R)-2-phosphoglycerate. Lys337 acts as the Proton acceptor in catalysis.

It belongs to the enolase family. It depends on Mg(2+) as a cofactor.

It is found in the cytoplasm. It localises to the secreted. The protein resides in the cell surface. It carries out the reaction (2R)-2-phosphoglycerate = phosphoenolpyruvate + H2O. It participates in carbohydrate degradation; glycolysis; pyruvate from D-glyceraldehyde 3-phosphate: step 4/5. Its function is as follows. Catalyzes the reversible conversion of 2-phosphoglycerate (2-PG) into phosphoenolpyruvate (PEP). It is essential for the degradation of carbohydrates via glycolysis. The sequence is that of Enolase from Thiobacillus denitrificans (strain ATCC 25259 / T1).